Consider the following 389-residue polypeptide: bZIP transcription factor 68 (389 aa).

Residues 1–16 are compositionally biased toward basic and acidic residues; sequence MGSSEMEKSGKEKEPK. Disordered stretches follow at residues 1-42, 124-154, 170-236, 285-318, and 356-389; these read MGSS…VSAG, MAEASGNTGSVIEGDGKPSDGKEKLPIKRSK, AGKN…NLPV, QPWLQVSDEREIKRQRRKQSNRESARRSRLRKQA, and SSLKNKFSSAPSLEGGDLDKNEQEPQRSTRQDVA. Low complexity predominate over residues 19-32; it reads PPSTSSSAPATVVS. Basic and acidic residues predominate over residues 137–149; it reads GDGKPSDGKEKLP. Lysine 154 participates in a covalent cross-link: Glycyl lysine isopeptide (Lys-Gly) (interchain with G-Cter in ubiquitin). The span at 170–205 shows a compositional bias: low complexity; it reads AGKNSGASANGACSKSAESGSDGSSDGSDANSQNDS. Basic and acidic residues-rich tracts occupy residues 206 to 215 and 304 to 318; these read GSRHNGKDGE and SNRESARRSRLRKQA. The bZIP domain maps to 295 to 358; that stretch reads EIKRQRRKQS…EELLAENSSL (64 aa). Positions 297 to 316 are basic motif; the sequence is KRQRRKQSNRESARRSRLRK. A leucine-zipper region spans residues 323–358; sequence LAQRAEVLNGENSSLRAEINKLKSQYEELLAENSSL. Polar residues predominate over residues 356–366; sequence SSLKNKFSSAP. Residues 372 to 389 show a composition bias toward basic and acidic residues; the sequence is DLDKNEQEPQRSTRQDVA.

This sequence belongs to the bZIP family. In terms of assembly, monomer, homodimer and heterodimers with GBF1/BZIP41, GBF2/BZIP54 and GBF3/BZIP55. Heterodimers with BZIP16. Interacts with GIP1.

It localises to the nucleus. Functionally, transcriptional activator that binds to the G-box motif (5'-CACGTG-3') and other cis-acting elements with 5'-ACGT-3' core, such as Hex, C-box and as-1 motifs. Possesses high binding affinity to G-box, much lower affinity to Hex and C-box, and little affinity to as-1 element. G-box and G-box-like motifs are cis-acting elements defined in promoters of certain plant genes which are regulated by such diverse stimuli as light-induction or hormone control. Binds to the G-box motif 5'-CACGTG-3' of LHCB2.4 (At3g27690) promoter. May act as transcriptional activator in light-regulated expression of LHCB2.4. Probably binds DNA as monomer. DNA-binding activity is redox-dependent. In Arabidopsis thaliana (Mouse-ear cress), this protein is bZIP transcription factor 68.